The chain runs to 115 residues: NADH-ubiquinone oxidoreductase chain 3 (115 aa).

3 consecutive transmembrane segments (helical) span residues 4 to 24 (LITM…AFWL), 55 to 75 (FFLV…LLPL), and 87 to 107 (TMMV…YEWL).

It belongs to the complex I subunit 3 family. Core subunit of respiratory chain NADH dehydrogenase (Complex I) which is composed of 45 different subunits. Interacts with TMEM186. Interacts with TMEM242.

The protein resides in the mitochondrion inner membrane. It carries out the reaction a ubiquinone + NADH + 5 H(+)(in) = a ubiquinol + NAD(+) + 4 H(+)(out). Its function is as follows. Core subunit of the mitochondrial membrane respiratory chain NADH dehydrogenase (Complex I) which catalyzes electron transfer from NADH through the respiratory chain, using ubiquinone as an electron acceptor. Essential for the catalytic activity of complex I. The chain is NADH-ubiquinone oxidoreductase chain 3 from Notiomys edwardsii (Edwards's long-clawed mouse).